The chain runs to 388 residues: Chorismate synthase (388 aa).

Residues R39 and R45 each coordinate NADP(+). Residues 130–132 (RSS), 251–252 (NA), G296, 311–315 (KPIPT), and R337 each bind FMN.

The protein belongs to the chorismate synthase family. As to quaternary structure, homotetramer. FMNH2 serves as cofactor.

It carries out the reaction 5-O-(1-carboxyvinyl)-3-phosphoshikimate = chorismate + phosphate. The protein operates within metabolic intermediate biosynthesis; chorismate biosynthesis; chorismate from D-erythrose 4-phosphate and phosphoenolpyruvate: step 7/7. Its function is as follows. Catalyzes the anti-1,4-elimination of the C-3 phosphate and the C-6 proR hydrogen from 5-enolpyruvylshikimate-3-phosphate (EPSP) to yield chorismate, which is the branch point compound that serves as the starting substrate for the three terminal pathways of aromatic amino acid biosynthesis. This reaction introduces a second double bond into the aromatic ring system. The protein is Chorismate synthase of Streptococcus pyogenes serotype M2 (strain MGAS10270).